Here is a 377-residue protein sequence, read N- to C-terminus: Anhydro-N-acetylmuramic acid kinase (377 aa).

18-25 serves as a coordination point for ATP; that stretch reads GTSADGID.

The protein belongs to the anhydro-N-acetylmuramic acid kinase family.

It carries out the reaction 1,6-anhydro-N-acetyl-beta-muramate + ATP + H2O = N-acetyl-D-muramate 6-phosphate + ADP + H(+). Its pathway is amino-sugar metabolism; 1,6-anhydro-N-acetylmuramate degradation. It functions in the pathway cell wall biogenesis; peptidoglycan recycling. Its function is as follows. Catalyzes the specific phosphorylation of 1,6-anhydro-N-acetylmuramic acid (anhMurNAc) with the simultaneous cleavage of the 1,6-anhydro ring, generating MurNAc-6-P. Is required for the utilization of anhMurNAc either imported from the medium or derived from its own cell wall murein, and thus plays a role in cell wall recycling. The protein is Anhydro-N-acetylmuramic acid kinase of Xanthomonas campestris pv. campestris (strain 8004).